The chain runs to 80 residues: Metallothionein-like protein type 2 MET1 (80 aa).

It belongs to the metallothionein superfamily. Type 15 family.

Functionally, metallothioneins have a high content of cysteine residues that bind various heavy metals. The sequence is that of Metallothionein-like protein type 2 MET1 (MET1) from Fragaria ananassa (Strawberry).